The following is a 67-amino-acid chain: Large ribosomal subunit protein bL32 (67 aa).

The span at Met-1 to Trp-20 shows a compositional bias: basic residues. The interval Met-1–Ala-24 is disordered.

Belongs to the bacterial ribosomal protein bL32 family.

The sequence is that of Large ribosomal subunit protein bL32 from Renibacterium salmoninarum (strain ATCC 33209 / DSM 20767 / JCM 11484 / NBRC 15589 / NCIMB 2235).